The primary structure comprises 221 residues: Glutathione S-transferase 1 (221 aa).

The region spanning 7-88 (QKMQLYSFSL…YLEEKFPENP (82 aa)) is the GST N-terminal domain. Residues 17–22 (SSCAWR), Val60, 72–73 (DS), Gln112, and 116–118 (NLA) contribute to the glutathione site. The GST C-terminal domain occupies 93-221 (DLQKRALNYQ…ISPMLDEAKS (129 aa)).

Belongs to the GST superfamily. Zeta family.

The catalysed reaction is RX + glutathione = an S-substituted glutathione + a halide anion + H(+). Its function is as follows. Conjugation of reduced glutathione to a wide number of exogenous and endogenous hydrophobic electrophiles. The chain is Glutathione S-transferase 1 (GST1) from Dianthus caryophyllus (Carnation).